Here is a 197-residue protein sequence, read N- to C-terminus: Nucleoid occlusion factor SlmA (197 aa).

One can recognise an HTH tetR-type domain in the interval 7–67 (INRREHILQC…GLIEFIEESL (61 aa)). Positions 30–49 (TTAKLAAEVGVSEAALYRHF) form a DNA-binding region, H-T-H motif. Positions 109–136 (DALLGENERLRSRISQLFAKIETHLKQI) form a coiled coil.

It belongs to the nucleoid occlusion factor SlmA family. As to quaternary structure, homodimer. Interacts with FtsZ.

The protein resides in the cytoplasm. It localises to the nucleoid. Functionally, required for nucleoid occlusion (NO) phenomenon, which prevents Z-ring formation and cell division over the nucleoid. Acts as a DNA-associated cell division inhibitor that binds simultaneously chromosomal DNA and FtsZ, and disrupts the assembly of FtsZ polymers. SlmA-DNA-binding sequences (SBS) are dispersed on non-Ter regions of the chromosome, preventing FtsZ polymerization at these regions. The polypeptide is Nucleoid occlusion factor SlmA (Shewanella halifaxensis (strain HAW-EB4)).